A 685-amino-acid polypeptide reads, in one-letter code: Polyphosphate kinase (685 aa).

Asn-45 lines the ATP pocket. Positions 375 and 405 each coordinate Mg(2+). His-435 functions as the Phosphohistidine intermediate in the catalytic mechanism. The ATP site is built by Tyr-468, Arg-564, and His-592.

This sequence belongs to the polyphosphate kinase 1 (PPK1) family. It depends on Mg(2+) as a cofactor. Post-translationally, an intermediate of this reaction is the autophosphorylated ppk in which a phosphate is covalently linked to a histidine residue through a N-P bond.

The enzyme catalyses [phosphate](n) + ATP = [phosphate](n+1) + ADP. Catalyzes the reversible transfer of the terminal phosphate of ATP to form a long-chain polyphosphate (polyP). This chain is Polyphosphate kinase, found in Neisseria meningitidis serogroup A / serotype 4A (strain DSM 15465 / Z2491).